A 101-amino-acid chain; its full sequence is NAD(P)H-quinone oxidoreductase subunit 4L, chloroplastic (101 aa).

The next 3 membrane-spanning stretches (helical) occupy residues 2–22 (MTEHVLILSAYLFSIGIYGLI), 32–52 (MCLELILNAVNLNLVTFSDLF), and 61–81 (IFSIFVIAIAAAEAAIGPAIV).

The protein belongs to the complex I subunit 4L family. As to quaternary structure, NDH is composed of at least 16 different subunits, 5 of which are encoded in the nucleus.

The protein resides in the plastid. It localises to the chloroplast thylakoid membrane. The catalysed reaction is a plastoquinone + NADH + (n+1) H(+)(in) = a plastoquinol + NAD(+) + n H(+)(out). It carries out the reaction a plastoquinone + NADPH + (n+1) H(+)(in) = a plastoquinol + NADP(+) + n H(+)(out). Functionally, NDH shuttles electrons from NAD(P)H:plastoquinone, via FMN and iron-sulfur (Fe-S) centers, to quinones in the photosynthetic chain and possibly in a chloroplast respiratory chain. The immediate electron acceptor for the enzyme in this species is believed to be plastoquinone. Couples the redox reaction to proton translocation, and thus conserves the redox energy in a proton gradient. The chain is NAD(P)H-quinone oxidoreductase subunit 4L, chloroplastic from Liriodendron tulipifera (Tuliptree).